We begin with the raw amino-acid sequence, 188 residues long: Glutamyl endopeptidase 2 (188 aa).

Cysteines 14 and 34 form a disulfide. Residues His33, Asp62, and Ser143 each act as charge relay system in the active site. Cysteines 137 and 163 form a disulfide.

Belongs to the peptidase S1 family. In terms of assembly, monomer.

The catalysed reaction is Preferential cleavage: -Glu-|-Xaa- &gt;&gt; -Asp-|-Xaa-. Preference for Pro or Leu at P2 and Phe at P3. Cleavage of -Glu-|-Asp- and -Glu-|-Pro- bonds is slow.. Functionally, preferentially cleaves peptide bonds on the carboxyl-terminal side of glutamate. The polypeptide is Glutamyl endopeptidase 2 (sprE) (Streptomyces griseus).